The chain runs to 519 residues: Maturase K (519 aa).

It belongs to the intron maturase 2 family. MatK subfamily.

It localises to the plastid. The protein localises to the chloroplast. Usually encoded in the trnK tRNA gene intron. Probably assists in splicing its own and other chloroplast group II introns. This chain is Maturase K, found in Dioscorea elephantipes (Elephant's foot yam).